Reading from the N-terminus, the 197-residue chain is GTP cyclohydrolase 1 (197 aa).

Residues Cys-85, His-88, and Cys-156 each contribute to the Zn(2+) site.

Belongs to the GTP cyclohydrolase I family. In terms of assembly, toroid-shaped homodecamer, composed of two pentamers of five dimers.

The enzyme catalyses GTP + H2O = 7,8-dihydroneopterin 3'-triphosphate + formate + H(+). It participates in cofactor biosynthesis; 7,8-dihydroneopterin triphosphate biosynthesis; 7,8-dihydroneopterin triphosphate from GTP: step 1/1. The polypeptide is GTP cyclohydrolase 1 (Mesorhizobium japonicum (strain LMG 29417 / CECT 9101 / MAFF 303099) (Mesorhizobium loti (strain MAFF 303099))).